A 321-amino-acid polypeptide reads, in one-letter code: Lipoyl synthase (321 aa).

[4Fe-4S] cluster-binding residues include Cys-68, Cys-73, Cys-79, Cys-94, Cys-98, Cys-101, and Ser-308. A Radical SAM core domain is found at Phe-80 to Thr-297.

This sequence belongs to the radical SAM superfamily. Lipoyl synthase family. It depends on [4Fe-4S] cluster as a cofactor.

It localises to the cytoplasm. It catalyses the reaction [[Fe-S] cluster scaffold protein carrying a second [4Fe-4S](2+) cluster] + N(6)-octanoyl-L-lysyl-[protein] + 2 oxidized [2Fe-2S]-[ferredoxin] + 2 S-adenosyl-L-methionine + 4 H(+) = [[Fe-S] cluster scaffold protein] + N(6)-[(R)-dihydrolipoyl]-L-lysyl-[protein] + 4 Fe(3+) + 2 hydrogen sulfide + 2 5'-deoxyadenosine + 2 L-methionine + 2 reduced [2Fe-2S]-[ferredoxin]. Its pathway is protein modification; protein lipoylation via endogenous pathway; protein N(6)-(lipoyl)lysine from octanoyl-[acyl-carrier-protein]: step 2/2. Functionally, catalyzes the radical-mediated insertion of two sulfur atoms into the C-6 and C-8 positions of the octanoyl moiety bound to the lipoyl domains of lipoate-dependent enzymes, thereby converting the octanoylated domains into lipoylated derivatives. The protein is Lipoyl synthase of Shewanella sp. (strain MR-7).